Here is a 298-residue protein sequence, read N- to C-terminus: Ethanolamine ammonia-lyase small subunit (298 aa).

Residues 17-37 form a disordered region; it reads MGQDVPQPVAPSKQEGAKPQC. Residues Val210, Glu231, and Cys261 each coordinate adenosylcob(III)alamin.

Belongs to the EutC family. The basic unit is a heterodimer which dimerizes to form tetramers. The heterotetramers trimerize; 6 large subunits form a core ring with 6 small subunits projecting outwards. Adenosylcob(III)alamin is required as a cofactor.

Its subcellular location is the bacterial microcompartment. The catalysed reaction is ethanolamine = acetaldehyde + NH4(+). It functions in the pathway amine and polyamine degradation; ethanolamine degradation. Catalyzes the deamination of various vicinal amino-alcohols to oxo compounds. Allows this organism to utilize ethanolamine as the sole source of nitrogen and carbon in the presence of external vitamin B12. This chain is Ethanolamine ammonia-lyase small subunit, found in Salmonella paratyphi A (strain ATCC 9150 / SARB42).